A 328-amino-acid polypeptide reads, in one-letter code: Malate dehydrogenase (328 aa).

12-18 contributes to the NAD(+) binding site; that stretch reads GAAGQIA. Arginine 93 and arginine 99 together coordinate substrate. NAD(+) is bound by residues asparagine 106, glutamine 113, and 130-132; that span reads VGN. Substrate-binding residues include asparagine 132 and arginine 163. Histidine 188 functions as the Proton acceptor in the catalytic mechanism.

It belongs to the LDH/MDH superfamily. MDH type 2 family.

It carries out the reaction (S)-malate + NAD(+) = oxaloacetate + NADH + H(+). In terms of biological role, catalyzes the reversible oxidation of malate to oxaloacetate. In Burkholderia cenocepacia (strain ATCC BAA-245 / DSM 16553 / LMG 16656 / NCTC 13227 / J2315 / CF5610) (Burkholderia cepacia (strain J2315)), this protein is Malate dehydrogenase.